We begin with the raw amino-acid sequence, 22 residues long: Mu-conotoxin MIIIA (22 aa).

Pyrrolidone carboxylic acid is present on glutamine 1. 3 disulfides stabilise this stretch: cysteine 3–cysteine 15, cysteine 4–cysteine 21, and cysteine 10–cysteine 22. Cysteine 22 is subject to Cysteine amide.

This sequence belongs to the conotoxin M superfamily. In terms of tissue distribution, expressed by the venom duct.

The protein localises to the secreted. Functionally, mu-conotoxins block voltage-gated sodium channels (Nav). This synthetic toxin potently blocks rNav1.3/SCN3A. It also moderately blocks rNav1.1/SCN1A, rNav1.2/SCN2A, rNav1.4/SCN4A, mNav1.6/SCN8A, and Nav1.7/SCN9A. sodium channels. This block is very slowly reversible. This is Mu-conotoxin MIIIA from Conus magus (Magical cone).